A 419-amino-acid polypeptide reads, in one-letter code: 3-isopropylmalate dehydratase large subunit (419 aa).

Residues cysteine 300, cysteine 360, and cysteine 363 each coordinate [4Fe-4S] cluster.

The protein belongs to the aconitase/IPM isomerase family. LeuC type 2 subfamily. As to quaternary structure, heterodimer of LeuC and LeuD. It depends on [4Fe-4S] cluster as a cofactor.

It catalyses the reaction (2R,3S)-3-isopropylmalate = (2S)-2-isopropylmalate. It functions in the pathway amino-acid biosynthesis; L-leucine biosynthesis; L-leucine from 3-methyl-2-oxobutanoate: step 2/4. Its function is as follows. Catalyzes the isomerization between 2-isopropylmalate and 3-isopropylmalate, via the formation of 2-isopropylmaleate. The polypeptide is 3-isopropylmalate dehydratase large subunit (Acetivibrio thermocellus (strain ATCC 27405 / DSM 1237 / JCM 9322 / NBRC 103400 / NCIMB 10682 / NRRL B-4536 / VPI 7372) (Clostridium thermocellum)).